Reading from the N-terminus, the 378-residue chain is Quinolinate synthase (378 aa).

Histidine 59 and serine 80 together coordinate iminosuccinate. Cysteine 125 contacts [4Fe-4S] cluster. Residues 151–153 (YAN) and serine 168 each bind iminosuccinate. A [4Fe-4S] cluster-binding site is contributed by cysteine 212. Residues 238 to 240 (HPE) and threonine 255 contribute to the iminosuccinate site. Position 309 (cysteine 309) interacts with [4Fe-4S] cluster.

The protein belongs to the quinolinate synthase family. Type 1 subfamily. Requires [4Fe-4S] cluster as cofactor.

Its subcellular location is the cytoplasm. It carries out the reaction iminosuccinate + dihydroxyacetone phosphate = quinolinate + phosphate + 2 H2O + H(+). It functions in the pathway cofactor biosynthesis; NAD(+) biosynthesis; quinolinate from iminoaspartate: step 1/1. Its function is as follows. Catalyzes the condensation of iminoaspartate with dihydroxyacetone phosphate to form quinolinate. This is Quinolinate synthase from Burkholderia orbicola (strain MC0-3).